The following is a 102-amino-acid chain: Large ribosomal subunit protein bL21 (102 aa).

Belongs to the bacterial ribosomal protein bL21 family. Part of the 50S ribosomal subunit. Contacts protein L20.

Functionally, this protein binds to 23S rRNA in the presence of protein L20. The polypeptide is Large ribosomal subunit protein bL21 (Geotalea daltonii (strain DSM 22248 / JCM 15807 / FRC-32) (Geobacter daltonii)).